A 347-amino-acid chain; its full sequence is GMP reductase (347 aa).

108–131 (ADFEKTVQILALNPALNFVCIDVA) contributes to the NADP(+) binding site. Positions 181 and 183 each coordinate K(+). C186 functions as the Thioimidate intermediate in the catalytic mechanism. NADP(+) is bound at residue 216–239 (IVSDGGCTMPGDVAKAFGGGADFV).

This sequence belongs to the IMPDH/GMPR family. GuaC type 1 subfamily. In terms of assembly, homotetramer.

The catalysed reaction is IMP + NH4(+) + NADP(+) = GMP + NADPH + 2 H(+). In terms of biological role, catalyzes the irreversible NADPH-dependent deamination of GMP to IMP. It functions in the conversion of nucleobase, nucleoside and nucleotide derivatives of G to A nucleotides, and in maintaining the intracellular balance of A and G nucleotides. The chain is GMP reductase from Salmonella typhi.